We begin with the raw amino-acid sequence, 203 residues long: NAD(P)H dehydrogenase (quinone) (203 aa).

The region spanning 3-194 (VLIVYYSLYG…DAARFQGRHI (192 aa)) is the Flavodoxin-like domain. Residues 9–14 (SLYGHV) and 82–84 (TRF) each bind FMN. Tyr11 is a binding site for NAD(+). Trp102 lines the substrate pocket. Residues 117 to 123 (STATQHG) and His138 each bind FMN.

This sequence belongs to the WrbA family. FMN is required as a cofactor.

The catalysed reaction is a quinone + NADH + H(+) = a quinol + NAD(+). It catalyses the reaction a quinone + NADPH + H(+) = a quinol + NADP(+). This chain is NAD(P)H dehydrogenase (quinone), found in Solidesulfovibrio magneticus (strain ATCC 700980 / DSM 13731 / RS-1) (Desulfovibrio magneticus).